Here is a 190-residue protein sequence, read N- to C-terminus: PAVQGNDKKYTMSSVLKVSAADWKTNRFYQCQAGYNLNDMVESRFETPKIQEPNITALVPSVDFISSQNAVLGCVISGFAPDNIRVSWKKDQVDQTGVVLSSKRRTDNTFETISYLIIPTVNWKIGDKYTCEVSHPPSNFRSMISMKYQEGEKSSCPSGSPPGTCPPCSLTPELLYHTNLSVTLRNGEKH.

The 93-residue stretch at 53 to 145 (PNITALVPSV…PPSNFRSMIS (93 aa)) folds into the Ig-like C1-type domain. Asn-54 carries an N-linked (GlcNAc...) asparagine glycan. Residues Cys-74 and Cys-131 are joined by a disulfide bond. Residue Asn-179 is glycosylated (N-linked (GlcNAc...) asparagine).

As to expression, expressed in pancreas, spleen, epigonal organ and at low levels in several other tissues.

It is found in the secreted. This Ginglymostoma cirratum (Nurse shark) protein is Pancreatic IgW, short secretory form.